The primary structure comprises 175 residues: Large ribosomal subunit protein uL18 (175 aa).

This sequence belongs to the universal ribosomal protein uL18 family. In terms of assembly, part of the 50S ribosomal subunit. Contacts the 5S and 23S rRNAs.

Functionally, this is one of the proteins that bind and probably mediate the attachment of the 5S RNA into the large ribosomal subunit, where it forms part of the central protuberance. The chain is Large ribosomal subunit protein uL18 from Methanosphaerula palustris (strain ATCC BAA-1556 / DSM 19958 / E1-9c).